The sequence spans 1094 residues: Protein transport protein Sec24C (1094 aa).

Residues 1–338 (MNVNQSVPPV…PIQVIEDDRN (338 aa)) form a disordered region. Over residues 8-19 (PPVPPFGQPQPI) the composition is skewed to pro residues. 2 stretches are compositionally biased toward low complexity: residues 20 to 29 (YPGYHQSSYG) and 60 to 77 (SRAP…AQAP). The segment covering 90-101 (DVQNGPSSTVQM) has biased composition (polar residues). Positions 123–132 (VLQPYGPPPT) are enriched in pro residues. Polar residues-rich tracts occupy residues 133-144 (SAQVATQLSGMQ), 165-175 (SLASASGSFPN), 189-215 (PLSQ…SFTP), and 240-251 (SVSQPNHVSSPP). Phosphothreonine is present on Thr-214. Over residues 273-282 (PQQPGYQPQQ) the composition is skewed to low complexity. Positions 425, 428, 447, and 450 each coordinate Zn(2+). Residues 425–450 (CNRCKAYMCPFMQFIEGGRRFQCCFC) form a zinc finger-like region. The stretch at 962–1034 (TTEPPAVRAS…DNPLSKKVRG (73 aa)) is one Gelsolin-like repeat.

This sequence belongs to the SEC23/SEC24 family. SEC24 subfamily. As to quaternary structure, COPII is composed of at least five proteins: the Sec23/24 complex, the Sec13/31 complex and Sar1. Interacts with TMED2 and TMED10. Interacts with GOSR2 (via IxM motif) and STX5 (via IxM motif); recruits GOSR2 and STX5 into COPII-coated vesicles. Interacts with DDHD1. Interacts with STING1; promoting STING1 translocation to the COPII vesicles. Ubiquitous.

The protein localises to the cytoplasmic vesicle. It is found in the COPII-coated vesicle membrane. It localises to the endoplasmic reticulum membrane. Its subcellular location is the cytoplasm. The protein resides in the cytosol. Its function is as follows. Component of the coat protein complex II (COPII) which promotes the formation of transport vesicles from the endoplasmic reticulum (ER). The coat has two main functions, the physical deformation of the endoplasmic reticulum membrane into vesicles and the selection of cargo molecules for their transport to the Golgi complex. Plays a central role in cargo selection within the COPII complex and together with SEC24D may have a different specificity compared to SEC24A and SEC24B. May more specifically package GPI-anchored proteins through the cargo receptor TMED10. May also be specific for IxM motif-containing cargos like the SNAREs GOSR2 and STX5. The polypeptide is Protein transport protein Sec24C (Homo sapiens (Human)).